We begin with the raw amino-acid sequence, 162 residues long: Sorting nexin-3 (162 aa).

Alanine 2 is modified (N-acetylalanine). Positions 27-151 (NFLEIDVSNP…HMFLQDEIID (125 aa)) constitute a PX domain. An Omega-N-methylarginine modification is found at arginine 43. A 1,2-diacyl-sn-glycero-3-phospho-(1D-myo-inositol-3-phosphate) contacts are provided by arginine 70, serine 72, lysine 95, and arginine 118. Serine 72 carries the phosphoserine modification. Lysine 95 participates in a covalent cross-link: Glycyl lysine isopeptide (Lys-Gly) (interchain with G-Cter in SUMO2). Positions 147–162 (DEIIDKSYTPSKIRHA) are binds predominantly to PtdIns(P5) and weaker to PtdIns(P3) abd PtdIns(P4); involved in neurite outgrowth regulation.

Belongs to the sorting nexin family. Interacts with VPS26A, VPS29 and VPS35; the interaction with VPS35 is direct. The association with the retromer CSC subcomplex subunits is proposed to represent a functional distinct retromer variant described as SNX3-retromer complex. Interacts with USP10 and SCNN1A. Interacts with TRFC. Interacts with SNX8; 2 molecules of SNX8 seems to associate with one molecule of SNX3. Interacts with PTPRU. Interacts with MON2 and DOP1B. Ubiquitinated, leading to its proteasomal degradation. Deubiquitinated by USP10.

It localises to the early endosome. The protein resides in the cytoplasmic vesicle. The protein localises to the phagosome. In terms of biological role, phosphoinositide-binding protein required for multivesicular body formation. Specifically binds phosphatidylinositol 3-phosphate (PtdIns(P3)). Can also bind phosphatidylinositol 4-phosphate (PtdIns(P4)), phosphatidylinositol 5-phosphate (PtdIns(P5)) and phosphatidylinositol 3,5-biphosphate (PtdIns(3,5)P2). Plays a role in protein transport between cellular compartments. Together with RAB7A facilitates endosome membrane association of the retromer cargo-selective subcomplex (CSC/VPS). May in part act as component of the SNX3-retromer complex which mediates the retrograde endosome-to-TGN transport of WLS distinct from the SNX-BAR retromer pathway. Promotes stability and cell surface expression of epithelial sodium channel (ENAC) subunits SCNN1A and SCNN1G. Not involved in EGFR degradation. Involved in the regulation of phagocytosis in dendritic cells possibly by regulating EEA1 recruitment to the nascent phagosomes. Involved in iron homeostasis through regulation of endocytic recycling of the transferrin receptor TFRC presumably by delivering the transferrin:transferrin receptor complex to recycling endosomes; the function may involve the CSC retromer subcomplex. In the case of Salmonella enterica infection plays arole in maturation of the Salmonella-containing vacuole (SCV) and promotes recruitment of LAMP1 to SCVs. The polypeptide is Sorting nexin-3 (Homo sapiens (Human)).